Here is a 156-residue protein sequence, read N- to C-terminus: rRNA methyltransferase (156 aa).

Its function is as follows. Modifies 16S rRNA so making ribosomes resistant to certain aminoglycosides. The sequence is that of rRNA methyltransferase (kamC) from Saccharopolyspora hirsuta.